The primary structure comprises 531 residues: Probable calcium-binding mitochondrial carrier F17E5.2 (531 aa).

4 EF-hand domains span residues 70–105 (EKEKKIRDMYDRLDADNDGSIDIRDLTQALSLQAHI), 106–135 (PASVAPKLLERMKSEHSDRVTYADFTNYVI), 136–171 (AHEARLAEVFDKIDLNSDGEVDMAEIKSYCKEMGVN), and 172–207 (LDDQKAMSIVKKMDQSGSSSVNLNEFQDFMLLYPST). Asp83, Asp85, Asp87, Ser89, and Asp94 together coordinate Ca(2+). Ca(2+) contacts are provided by Asp149, Asn151, Asp153, Glu155, and Glu160. Solcar repeat units follow at residues 242-328 (GVWW…IKRW), 338-424 (LSTI…LKSM), and 435-525 (PGVL…VRKQ). Transmembrane regions (helical) follow at residues 248 to 265 (LVAGGVAGAMSRTCTAPF), 303 to 322 (GNGINVIKIAPESAMKFMCY), 348 to 361 (SSAGAISQTAIYPM), 399 to 418 (GYLPNLLGIIPYAGIDLTVY), 441 to 458 (LACGTCSSTCGQLASYPL), and 500 to 517 (GITPNFMKVIPAVSISYV).

This sequence belongs to the mitochondrial carrier (TC 2.A.29) family.

It localises to the mitochondrion inner membrane. Its function is as follows. Calcium-dependent mitochondrial solute carrier. In Caenorhabditis elegans, this protein is Probable calcium-binding mitochondrial carrier F17E5.2.